The following is a 661-amino-acid chain: SUMO-activating enzyme subunit 2 (661 aa).

ATP contacts are provided by residues 29 to 34 (GAGGIG), aspartate 53, 61 to 64 (NLNR), lysine 77, and 122 to 127 (DNISAR). The Zn(2+) site is built by cysteine 163 and cysteine 166. The active-site Glycyl thioester intermediate is the cysteine 178. The Zn(2+) site is built by cysteine 436 and cysteine 439. The tract at residues 545–661 (KKQQQKEKDQ…SKKLKSNLQD (117 aa)) is disordered. Residues 548 to 563 (QQKEKDQKEGKTTTIE) show a composition bias toward basic and acidic residues. Low complexity-rich tracts occupy residues 577-607 (TSQT…NNNN) and 623-634 (SSTTTSSATPSI).

Belongs to the ubiquitin-activating E1 family. In terms of assembly, heterodimer of sae1 and sae2. The complex binds sumo via sae2.

The protein localises to the nucleus. It participates in protein modification; protein sumoylation. The dimeric enzyme acts as an E1 ligase for sumo. It mediates ATP-dependent activation of sumo and formation of a thioester with a conserved cysteine residue on sae2. The polypeptide is SUMO-activating enzyme subunit 2 (uba2) (Dictyostelium discoideum (Social amoeba)).